The primary structure comprises 561 residues: DNA ligase B (561 aa).

Lys-125 (N6-AMP-lysine intermediate) is an active-site residue.

Belongs to the NAD-dependent DNA ligase family. LigB subfamily.

The catalysed reaction is NAD(+) + (deoxyribonucleotide)n-3'-hydroxyl + 5'-phospho-(deoxyribonucleotide)m = (deoxyribonucleotide)n+m + AMP + beta-nicotinamide D-nucleotide.. Catalyzes the formation of phosphodiester linkages between 5'-phosphoryl and 3'-hydroxyl groups in double-stranded DNA using NAD as a coenzyme and as the energy source for the reaction. This chain is DNA ligase B, found in Salmonella heidelberg (strain SL476).